A 251-amino-acid polypeptide reads, in one-letter code: MHIDLNSDLGESLGAWRMGDDAAMLGIVTSANVACGFHAGDAAGILATLRGAKERGVAVGAHVAYRDLAGFGRRNMDVASADLVADVIYQIGALQGLATAAGTRVTYVKPHGALYNTIARDARQARDVIAAIRAIDASLALVVLAGSPLERWAADAGLRVVAEAFADRAYTPQGTLVSRREPGAVLHDAGEVARRMLQLVREGTVRAIDGSTTRVRADSICVHGDSPGAVDMARAVRGALEREGIALRPFA.

Belongs to the LamB/PxpA family. In terms of assembly, forms a complex composed of PxpA, PxpB and PxpC.

The catalysed reaction is 5-oxo-L-proline + ATP + 2 H2O = L-glutamate + ADP + phosphate + H(+). In terms of biological role, catalyzes the cleavage of 5-oxoproline to form L-glutamate coupled to the hydrolysis of ATP to ADP and inorganic phosphate. The sequence is that of 5-oxoprolinase subunit A from Paracidovorax citrulli (strain AAC00-1) (Acidovorax citrulli).